A 582-amino-acid chain; its full sequence is Formate--tetrahydrofolate ligase (582 aa).

Residue 65-72 (TPLGEGKT) participates in ATP binding.

It belongs to the formate--tetrahydrofolate ligase family.

It catalyses the reaction (6S)-5,6,7,8-tetrahydrofolate + formate + ATP = (6R)-10-formyltetrahydrofolate + ADP + phosphate. It participates in one-carbon metabolism; tetrahydrofolate interconversion. This chain is Formate--tetrahydrofolate ligase, found in Aliivibrio fischeri (strain ATCC 700601 / ES114) (Vibrio fischeri).